The chain runs to 108 residues: Replication initiation control protein YabA (108 aa).

Positions 83, 85, 99, and 102 each coordinate Zn(2+).

Belongs to the YabA family. Homotetramer. Interacts with both DnaA and DnaN, acting as a bridge between these two proteins. Requires Zn(2+) as cofactor.

It localises to the cytoplasm. Its subcellular location is the nucleoid. Functionally, involved in control of chromosome replication initiation. Inhibits the cooperative binding of DnaA to the oriC region, thus negatively regulating initiation of chromosome replication. Inhibits the ability of DnaA-ATP to form a helix on DNA; does not disassemble preformed DnaA-DNA helices. Decreases the residence time of DnaA on the chromosome at its binding sites (oriC, replication forks and promoter-binding sites). Tethers DnaA to the replication machinery via the DNA polymerase beta sliding clamp subunit (dnaN). Associates with oriC and other DnaA targets on the chromosome in a DnaA-dependent manner. The protein is Replication initiation control protein YabA of Lactococcus lactis subsp. lactis (strain IL1403) (Streptococcus lactis).